Here is a 348-residue protein sequence, read N- to C-terminus: MDEWLAEFIKRTILKLPFSETVTILKAWGFLTESELQTFTFRYPKDVTATEVVRLCEAKNATVDHAAALDLVFNHAYSNKKSWTVYQMSKPSESENDLFDASEFKLQFKKSIHAVSKNVTLNFKQFGEALWIRIAWGTHNTRPNQYKATFAVYHSQTPYVFITGLGKACRPLMCQALVIAAKYSQIQEMELKSRCLESLKDIVFKRFNQPFSSHHSIPHEKALIPKIVDPRVIYENMREKDRVSHLTRETFGEGPLPKLELASYKLETMFRAESIMDGNLTAVNEPFRCVVKFSSPHLLEAIRSLAPAGIAEAPISTLLSCIPHKARNSFKITEKRGMHPTSSQTTNF.

Belongs to the CENP-N/CHL4 family.

It localises to the nucleus. It is found in the chromosome. Its subcellular location is the centromere. Functionally, probable component of a centromeric complex involved in assembly of kinetochore proteins, mitotic progression and chromosome segregation. The chain is Centromere protein N-A (cenpn-a) from Xenopus laevis (African clawed frog).